We begin with the raw amino-acid sequence, 308 residues long: Ribose 1,5-bisphosphate isomerase (308 aa).

Residues 24–27 (RGAG) and arginine 67 each bind substrate. The active-site Proton acceptor is the cysteine 129. The active-site Proton donor is the aspartate 198. Substrate contacts are provided by residues 208–209 (NK) and lysine 234.

This sequence belongs to the eIF-2B alpha/beta/delta subunits family. R15P isomerase subfamily.

The enzyme catalyses alpha-D-ribose 1,5-bisphosphate = D-ribulose 1,5-bisphosphate. Functionally, catalyzes the isomerization of ribose 1,5-bisphosphate (R15P) to ribulose 1,5-bisphosphate (RuBP), the CO(2) acceptor and substrate for RubisCO. Functions in an archaeal AMP degradation pathway, together with AMP phosphorylase and RubisCO. The sequence is that of Ribose 1,5-bisphosphate isomerase from Methanocaldococcus jannaschii (strain ATCC 43067 / DSM 2661 / JAL-1 / JCM 10045 / NBRC 100440) (Methanococcus jannaschii).